The primary structure comprises 442 residues: tRNA modification GTPase MnmE (442 aa).

Residues Arg27, Glu84, and Lys124 each contribute to the (6S)-5-formyl-5,6,7,8-tetrahydrofolate site. Residues 221–366 form the TrmE-type G domain; sequence GFQIVILGAP…LMELISQASA (146 aa). Residues 231-236, 250-256, 275-278, and 329-332 each bind GTP; these read NAGKSS, TEEPGTT, DTAG, and NKAD. Ser235 and Thr256 together coordinate Mg(2+). A (6S)-5-formyl-5,6,7,8-tetrahydrofolate-binding site is contributed by Lys442.

This sequence belongs to the TRAFAC class TrmE-Era-EngA-EngB-Septin-like GTPase superfamily. TrmE GTPase family. As to quaternary structure, homodimer. Heterotetramer of two MnmE and two MnmG subunits. It depends on K(+) as a cofactor.

The protein localises to the cytoplasm. In terms of biological role, exhibits a very high intrinsic GTPase hydrolysis rate. Involved in the addition of a carboxymethylaminomethyl (cmnm) group at the wobble position (U34) of certain tRNAs, forming tRNA-cmnm(5)s(2)U34. The chain is tRNA modification GTPase MnmE from Chelativorans sp. (strain BNC1).